The sequence spans 599 residues: ATP-binding cassette sub-family E member 1 (599 aa).

4Fe-4S ferredoxin-type domains lie at 7-37 (RIAIVNHDKCKPKKCRQECKKSCPVVRMGKL) and 46-75 (KIAWISETLCIGCGICIKKCPFGALSIVNL). Lys-20 participates in a covalent cross-link: Glycyl lysine isopeptide (Lys-Gly) (interchain with G-Cter in ubiquitin). 2 consecutive ABC transporter domains span residues 79–315 (LEKE…FLDG) and 342–562 (VKKM…LSQL). Residues 110–117 (GTNGIGKS) and 379–386 (GENGTGKT) contribute to the ATP site. Ser-417 carries the phosphoserine modification. At Thr-550 the chain carries Phosphothreonine.

The protein belongs to the ABC transporter superfamily. ABCE family. As to quaternary structure, (Microbial infection) Interacts with Chandipura virus matrix protein. In terms of assembly, interacts with PINK1. Interacts with CNOT4. Interacts with PELO. Probably heterodimerizes with RNASEL; this interaction inhibits RNASEL. (Microbial infection) Interacts with HIV-1 proteins Vif and Gag. As to quaternary structure, (Microbial infection) Interacts with HIV-2 protein Gag. Post-translationally, ubiquitinated by CNOT4. Ubiquitination mediates the recruitment of autophagy receptors to the mitochondrial outer membrane and initiates mitophagy.

The protein localises to the cytoplasm. It is found in the mitochondrion. It catalyses the reaction GTP + H2O = GDP + phosphate + H(+). The catalysed reaction is ATP + H2O = ADP + phosphate + H(+). It carries out the reaction CTP + H2O = CDP + phosphate + H(+). The enzyme catalyses UTP + H2O = UDP + phosphate + H(+). Nucleoside-triphosphatase (NTPase) involved in ribosome recycling by mediating ribosome disassembly. Able to hydrolyze ATP, GTP, UTP and CTP. Splits ribosomes into free 60S subunits and tRNA- and mRNA-bound 40S subunits. Acts either after canonical termination facilitated by release factors (ETF1/eRF1) or after recognition of stalled and vacant ribosomes by mRNA surveillance factors (PELO/Pelota). Involved in the No-Go Decay (NGD) pathway: recruited to stalled ribosomes by the Pelota-HBS1L complex, and drives the disassembly of stalled ribosomes, followed by degradation of damaged mRNAs as part of the NGD pathway. Also plays a role in quality control of translation of mitochondrial outer membrane-localized mRNA. As part of the PINK1-regulated signaling, ubiquitinated by CNOT4 upon mitochondria damage; this modification generates polyubiquitin signals that recruit autophagy receptors to the mitochondrial outer membrane and initiate mitophagy. RNASEL-specific protein inhibitor which antagonizes the binding of 2-5A (5'-phosphorylated 2',5'-linked oligoadenylates) to RNASEL. Negative regulator of the anti-viral effect of the interferon-regulated 2-5A/RNASEL pathway. Its function is as follows. (Microbial infection) May act as a chaperone for post-translational events during HIV-1 capsid assembly. Functionally, (Microbial infection) Plays a role in the down-regulation of the 2-5A/RNASEL pathway during encephalomyocarditis virus (EMCV) and HIV-1 infections. This is ATP-binding cassette sub-family E member 1 (ABCE1) from Homo sapiens (Human).